The following is an 82-amino-acid chain: Small, acid-soluble spore protein gamma-type (82 aa).

Composition is skewed to polar residues over residues 1 to 24 (MANS…ASGQ) and 32 to 50 (ASET…SAAG). The disordered stretch occupies residues 1–82 (MANSNNKTNA…SAEQNKQQNS (82 aa)). 2 repeats span residues 19–45 (QSAS…KQNQ) and 46–72 (QSAA…QQNQ). A compositionally biased stretch (low complexity) spans 69 to 82 (QQNQSAEQNKQQNS).

This sequence belongs to the gamma-type SASP family.

SASP are bound to spore DNA. They are double-stranded DNA-binding proteins that cause DNA to change to an a-like conformation. They protect the DNA backbone from chemical and enzymatic cleavage and are thus involved in dormant spore's high resistance to UV light. In Bacillus subtilis, this protein is Small, acid-soluble spore protein gamma-type.